Reading from the N-terminus, the 558-residue chain is Cytochrome P450 monooxygenase sdnT (558 aa).

Residues 21–41 (IISLTTCFVCAFAVSFVALAI) form a helical membrane-spanning segment. The tract at residues 298–317 (QNAGSNTRPKPPKRKQDTQP) is disordered. 2 N-linked (GlcNAc...) asparagine glycosylation sites follow: asparagine 464 and asparagine 495. Residue cysteine 505 participates in heme binding.

The protein belongs to the cytochrome P450 family. The cofactor is heme.

It is found in the membrane. The protein operates within antibiotic biosynthesis. Cytochrome P450 monooxygenase; part of the gene cluster that mediates the biosynthesis of sordarin and hypoxysordarin, glycoside antibiotics with a unique tetracyclic diterpene aglycone structure. First, the geranylgeranyl diphosphate synthase sdnC constructs GGDP from farnesyl diphosphate and isopentenyl diphosphate. The diterpene cyclase sdnA then catalyzes the cyclization of GGDP to afford cycloaraneosene. Cycloaraneosene is then hydroxylated four times by the putative cytochrome P450 monooxygenases sdnB, sdnE, sdnF and sdnH to give a hydroxylated cycloaraneosene derivative such as cycloaraneosene-8,9,13,19-tetraol. Although the order of the hydroxylations is unclear, at least C8, C9 and C13 of the cycloaraneosene skeleton are hydroxylated before the sordaricin formation. Dehydration of the 13-hydroxy group of the hydroxylated cycloaraneosene derivative might be catalyzed by an unassigned hypothetical protein such as sdnG and sdnP to construct the cyclopentadiene moiety. The FAD-dependent oxidoreductase sdnN is proposed to catalyze the oxidation at C9 of the hydroxylated cycloaraneosene derivative and also catalyze the Baeyer-Villiger oxidation to give the lactone intermediate. The presumed lactone intermediate would be hydrolyzed to give an acrolein moiety and a carboxylate moiety. Then, [4+2]cycloaddition would occur between the acrolein moiety and the cyclopentadiene moiety to give sordaricin. SdnN might also be involved in the [4+2]cycloaddition after the hypothesized oxidation to accommodate the oxidized product and prompt the [4+2]cycloaddition. GDP-6-deoxy-D-altrose may be biosynthesized from GDP-D-mannose by the putative GDP-mannose-4,6-dehydratase sdnI and the short-chain dehydrogenase sdnK. The glycosyltransferase sdnJ catalyzes the attachment of 6-deoxy-D-altrose onto the 19-hydroxy group of sordaricin to give 4'-O-demethylsordarin. The methyltransferase sdnD would complete the biosynthesis of sordarin. Sordarin can be further modified into hypoxysordarin. The unique acyl chain at the 3'-hydroxy group of hypoxysordarin would be constructed by an iterative type I PKS sdnO and the trans-acting polyketide methyltransferase sdnL. SdnL would be responsible for the introduction of an alpha-methyl group of the polyketide chain. Alternatively, the beta-lactamase-like protein sdnR might be responsible for the cleavage and transfer of the polyketide chain from the PKS sdnO to sordarin. Two putative cytochrome P450 monooxygenases, sdnQ and sdnT, might catalyze the epoxidations of the polyketide chain to complete the biosynthesis of hypoxysordarin. Transcriptional regulators sdnM and sdnS are presumably encoded for the transcriptional regulation of the expression of the sdn gene cluster. This chain is Cytochrome P450 monooxygenase sdnT, found in Sordaria araneosa (Pleurage araneosa).